The chain runs to 337 residues: Glyceraldehyde-3-phosphate dehydrogenase 2, cytosolic (337 aa).

A binding to NAD region spans residues 1 to 151; the sequence is MGKIKIGING…YTSDVNIVSN (151 aa). Residues 13–14, Asp-35, and Arg-82 contribute to the NAD(+) site; that span reads RI. A catalytic region spans residues 152 to 337; sequence ASCTTNCLAP…DLIRHMFKTQ (186 aa). Residues 153 to 155, Thr-184, 213 to 214, and Arg-236 each bind D-glyceraldehyde 3-phosphate; these read SCT and TG. Residue Cys-154 is the Nucleophile of the active site. An NAD(+)-binding site is contributed by Asn-318.

Belongs to the glyceraldehyde-3-phosphate dehydrogenase family. In terms of assembly, homotetramer. As to expression, developing seeds, seedling roots and shoots, and embryo.

Its subcellular location is the cytoplasm. It carries out the reaction D-glyceraldehyde 3-phosphate + phosphate + NAD(+) = (2R)-3-phospho-glyceroyl phosphate + NADH + H(+). Its pathway is carbohydrate degradation; glycolysis; pyruvate from D-glyceraldehyde 3-phosphate: step 1/5. Functionally, key enzyme in glycolysis that catalyzes the first step of the pathway by converting D-glyceraldehyde 3-phosphate (G3P) into 3-phospho-D-glyceroyl phosphate. Essential for the maintenance of cellular ATP levels and carbohydrate metabolism. In Zea mays (Maize), this protein is Glyceraldehyde-3-phosphate dehydrogenase 2, cytosolic (GAPC2).